Reading from the N-terminus, the 295-residue chain is Diaminopimelate epimerase (295 aa).

Residues Asn-13, Gln-46, and Asn-66 each coordinate substrate. The active-site Proton donor is Cys-75. Substrate is bound by residues 76–77 (GN), Asn-162, Asn-195, and 213–214 (ER). Cys-222 acts as the Proton acceptor in catalysis. 223 to 224 (GT) is a binding site for substrate.

The protein belongs to the diaminopimelate epimerase family. Homodimer.

It localises to the cytoplasm. The enzyme catalyses (2S,6S)-2,6-diaminopimelate = meso-2,6-diaminopimelate. It participates in amino-acid biosynthesis; L-lysine biosynthesis via DAP pathway; DL-2,6-diaminopimelate from LL-2,6-diaminopimelate: step 1/1. Its function is as follows. Catalyzes the stereoinversion of LL-2,6-diaminopimelate (L,L-DAP) to meso-diaminopimelate (meso-DAP), a precursor of L-lysine and an essential component of the bacterial peptidoglycan. This Psychrobacter cryohalolentis (strain ATCC BAA-1226 / DSM 17306 / VKM B-2378 / K5) protein is Diaminopimelate epimerase.